The sequence spans 557 residues: Tryptophan 2-monooxygenase (557 aa).

The FMN site is built by S49, E69, R71, R77, and R98. Residue R98 coordinates substrate.

This sequence belongs to the tryptophan 2-monooxygenase family. Monomer. The cofactor is FMN.

It catalyses the reaction L-tryptophan + O2 = indole-3-acetamide + CO2 + H2O. It functions in the pathway plant hormone metabolism; auxin biosynthesis. This chain is Tryptophan 2-monooxygenase (iaaM), found in Pseudomonas savastanoi (Pseudomonas syringae pv. savastanoi).